The chain runs to 156 residues: Sensor histidine kinase component HK2 (156 aa).

The Extracellular portion of the chain corresponds to 1–42 (MALVLAAAGAVTVVQFRDAAHEADPDGALRGLTDDITADLVR). A helical membrane pass occupies residues 43–63 (ELVTILPIVLVIAAVAAYLLS). One can recognise an HAMP domain in the interval 64–120 (RAALRPVDRIRAAAQTLTTTPHPDTDAPLPVPPTDDEIAWLATTLNTMLTRLQRALA). At 64 to 156 (RAALRPVDRI…RCAGPDPPTS (93 aa)) the chain is on the cytoplasmic side. One can recognise a Histidine kinase; first part domain in the interval 128-156 (DASHELRTPLALLTTELELRCAGPDPPTS). Residue histidine 131 is modified to Phosphohistidine; by autocatalysis.

In terms of assembly, homodimer. Each monomer interacts with HK1 and the receiver domain of TcrA. Post-translationally, phosphorylated by HK1.

The protein localises to the cell membrane. The enzyme catalyses ATP + protein L-histidine = ADP + protein N-phospho-L-histidine.. Its function is as follows. Member of the three-protein two-component system HK1/HK2/TcrA. HK2 transfers its phosphoryl group to TcrA. This is Sensor histidine kinase component HK2 from Mycobacterium tuberculosis (strain ATCC 25618 / H37Rv).